The following is a 302-amino-acid chain: MPKKQLPPKEERHKLFGSVPPKERTKPIEKNKMADLQNTKRDFLFKLDAVGISNVKYPVIIHSDLAPKEQTSIGTFEFSSSIPTMSKGTNMSRFMELLQEYSSSGMNVSISELKRFTKELSGKLEQKDATIEVSFPWFFERKGPESQSAGMNHADAKLSVTYDSNSGFSIDVSLSAWITTLCPCSKEISEYSAHNQRGNVTLEATLVEDFDEAKIDWKLALLEAAESNASARLHPVLKRTDEKMVTEQAYENPRFVEDMVRLIAADLYEMPFVSKFHVSCRNEESIHMHDAIASITYDKSSE.

A disordered region spans residues 1-27; sequence MPKKQLPPKEERHKLFGSVPPKERTKP.

The protein belongs to the GTP cyclohydrolase IV family.

It carries out the reaction GTP + H2O = 7,8-dihydroneopterin 3'-triphosphate + formate + H(+). It functions in the pathway cofactor biosynthesis; 7,8-dihydroneopterin triphosphate biosynthesis; 7,8-dihydroneopterin triphosphate from GTP: step 1/1. In terms of biological role, converts GTP to 7,8-dihydroneopterin triphosphate. This is GTP cyclohydrolase FolE2 from Oceanobacillus iheyensis (strain DSM 14371 / CIP 107618 / JCM 11309 / KCTC 3954 / HTE831).